Reading from the N-terminus, the 397-residue chain is Aspartate/prephenate aminotransferase (397 aa).

Gly-38, Trp-124, and Asn-174 together coordinate L-aspartate. Position 238 is an N6-(pyridoxal phosphate)lysine (Lys-238). Arg-375 is a binding site for L-aspartate.

It belongs to the class-I pyridoxal-phosphate-dependent aminotransferase family. As to quaternary structure, homodimer. The cofactor is pyridoxal 5'-phosphate.

Its subcellular location is the cytoplasm. The enzyme catalyses L-aspartate + 2-oxoglutarate = oxaloacetate + L-glutamate. It carries out the reaction L-arogenate + 2-oxoglutarate = prephenate + L-glutamate. Catalyzes the reversible conversion of aspartate and 2-oxoglutarate to glutamate and oxaloacetate. Can also transaminate prephenate in the presence of glutamate, with lower efficiency. The polypeptide is Aspartate/prephenate aminotransferase (Nitrosomonas europaea (strain ATCC 19718 / CIP 103999 / KCTC 2705 / NBRC 14298)).